We begin with the raw amino-acid sequence, 81 residues long: Short neurotoxin 2 (81 aa).

Residues 1-21 form the signal peptide; it reads MKTLLLTLVVVTIVCLDLGYT. 4 disulfide bridges follow: C24-C43, C38-C60, C62-C73, and C74-C79.

The protein belongs to the three-finger toxin family. Short-chain subfamily. Type I alpha-neurotoxin sub-subfamily. In terms of tissue distribution, expressed by the venom gland.

Its subcellular location is the secreted. Binds to muscle nicotinic acetylcholine receptor (nAChR) and inhibit acetylcholine from binding to the receptor, thereby impairing neuromuscular transmission. This chain is Short neurotoxin 2, found in Hydrophis peronii (Spiny-headed seasnake).